A 463-amino-acid polypeptide reads, in one-letter code: Fumarate hydratase class II (463 aa).

Residues Ser-98–Thr-100, His-129–Asp-132, Ser-139–Asn-141, and Thr-187 contribute to the substrate site. His-188 acts as the Proton donor/acceptor in catalysis. Residue Ser-318 is part of the active site. Substrate contacts are provided by residues Ser-319 and Lys-324–Asn-326.

The protein belongs to the class-II fumarase/aspartase family. Fumarase subfamily. As to quaternary structure, homotetramer.

Its subcellular location is the cytoplasm. It catalyses the reaction (S)-malate = fumarate + H2O. The protein operates within carbohydrate metabolism; tricarboxylic acid cycle; (S)-malate from fumarate: step 1/1. Involved in the TCA cycle. Catalyzes the stereospecific interconversion of fumarate to L-malate. This is Fumarate hydratase class II from Rhizobium meliloti (strain 1021) (Ensifer meliloti).